A 335-amino-acid polypeptide reads, in one-letter code: Dolichyl-diphosphooligosaccharide--protein glycosyltransferase subunit MAGT1 (335 aa).

The signal sequence occupies residues M1–A29. Residues Q30 to P184 lie on the Extracellular side of the membrane. A Thioredoxin domain is found at W47–D175. N71 carries N-linked (GlcNAc...) asparagine glycosylation. C87 and C90 form a disulfide bridge. The chain crosses the membrane as a helical span at residues N185–L205. Residues R206–N209 lie on the Cytoplasmic side of the membrane. The chain crosses the membrane as a helical span at residues M210–M230. Residues T231–H270 lie on the Extracellular side of the membrane. Residues I271–T291 form a helical membrane-spanning segment. Topologically, residues S292–K300 are cytoplasmic. Residues I301–F321 traverse the membrane as a helical segment. At R322–S335 the chain is on the extracellular side.

It belongs to the OST3/OST6 family. As to quaternary structure, accessory component of the STT3B-containing form of the oligosaccharyltransferase (OST) complex. OST exists in two different complex forms which contain common core subunits RPN1, RPN2, OST48, OST4, DAD1 and TMEM258, either STT3A or STT3B as catalytic subunits, and form-specific accessory subunits. OST can form stable complexes with the Sec61 complex or with both the Sec61 and TRAP complexes. The association of TUSC3 or MAGT1 with the STT3B-containing complex seems to be mutually exclusvice. In terms of tissue distribution, ubiquitous. Expressed at very low levels in brain, lung and kidney.

It is found in the cell membrane. The protein resides in the endoplasmic reticulum. It localises to the endoplasmic reticulum membrane. Its pathway is protein modification; protein glycosylation. Accessory component of the STT3B-containing form of the N-oligosaccharyl transferase (OST) complex which catalyzes the transfer of a high mannose oligosaccharide from a lipid-linked oligosaccharide donor to an asparagine residue within an Asn-X-Ser/Thr consensus motif in nascent polypeptide chains. Involved in N-glycosylation of STT3B-dependent substrates. Specifically required for the glycosylation of a subset of acceptor sites that are near cysteine residues; in this function seems to act redundantly with TUSC3. In its oxidized form proposed to form transient mixed disulfides with a glycoprotein substrate to facilitate access of STT3B to the unmodified acceptor site. Also has oxidoreductase-independent functions in the STT3B-containing OST complex possibly involving substrate recognition. Could indirectly play a role in Mg(2+) transport in epithelial cells. The chain is Dolichyl-diphosphooligosaccharide--protein glycosyltransferase subunit MAGT1 from Homo sapiens (Human).